The chain runs to 340 residues: Pre-mRNA-splicing factor cwf17 (340 aa).

WD repeat units follow at residues 48–87 (GHTA…KNYG), 91–130 (GCKG…KIRK), 133–173 (GHAG…CIKT), 175–214 (EEKY…CSHV), 217–256 (GHKD…SAQR), 267–306 (GQEH…RYVL), and 308–339 (GHEG…LGEL).

Belongs to the 40S cdc5-associated complex (or cwf complex), a spliceosome sub-complex reminiscent of a late-stage spliceosome composed of the U2, U5 and U6 snRNAs and at least brr2, cdc5, cwf2/prp3, cwf3/syf1, cwf4/syf3, cwf5/ecm2, spp42/cwf6, cwf7/spf27, cwf8, cwf9, cwf10, cwf11, cwf12, prp45/cwf13, cwf14, cwf15, cwf16, cwf17, cwf18, cwf19, cwf20, cwf21, cwf22, cwf23, cwf24, cwf25, cwf26, cyp7/cwf27, cwf28, cwf29/ist3, lea1, msl1, prp5/cwf1, prp10, prp12/sap130, prp17, prp22, sap61, sap62, sap114, sap145, slu7, smb1, smd1, smd3, smf1, smg1 and syf2.

It is found in the nucleus. Functionally, involved in mRNA splicing where it associates with cdc5 and the other cwf proteins as part of the spliceosome. In Schizosaccharomyces pombe (strain 972 / ATCC 24843) (Fission yeast), this protein is Pre-mRNA-splicing factor cwf17 (cwf17).